The following is a 796-amino-acid chain: DNA damage-responsive transcriptional repressor RPH1 (796 aa).

Residues 14 to 55 (VPVFKPTYEQFEDFYAYCKAINKYGMKSGVVKVIPPKEWKDK) form the JmjN domain. Residues 193 to 355 (PEGLNVWNVA…IGKKAGKCHC (163 aa)) enclose the JmjC domain. T399 bears the Phosphothreonine mark. Residues S430, S459, S557, S561, S575, and S584 each carry the phosphoserine modification. Residues 455-471 (KRISSFQEQPLNKLLKR) carry the Bipartite nuclear localization signal motif. The tract at residues 599–692 (RQQHSQQHSF…DKEQGSSPLN (94 aa)) is disordered. Residues 601-621 (QHSQQHSFSTPSTVSNLSTSV) show a composition bias toward polar residues. Positions 629–640 (NDIKTPHPERPN) are enriched in basic and acidic residues. S652 bears the Phosphoserine mark. The segment covering 654-669 (VETSKSNLILSKVAST) has biased composition (polar residues). Residues 670 to 686 (RQEDSFTSRNDDLDKEQ) are compositionally biased toward basic and acidic residues. Phosphoserine is present on S689. The segment at 709–732 (YICKECQRKFSSGHHLTRHKKSVH) adopts a C2H2-type 1 zinc-finger fold. A C2H2-type 2; atypical zinc finger spans residues 738 to 763 (HSCPKCGKRFKRRDHVLQHLNKKIPC). Positions 774–796 (IMNPTVQPQDGKAAINQQSTPLN) are disordered.

In terms of processing, RAD53-dependent phosphorylated in response to DNA damage.

Its subcellular location is the nucleus. Transcriptional repressor of photolyase PHR1. Recognizes and binds the sequence AG(4) in the upstream repressing sequence of PHR1. Derepresses PHR1 transcription when phosphorylated. This chain is DNA damage-responsive transcriptional repressor RPH1 (RPH1), found in Saccharomyces cerevisiae (strain ATCC 204508 / S288c) (Baker's yeast).